The primary structure comprises 1792 residues: uncharacterized protein (1792 aa).

Over residues 1 to 28 (MNNNNNNNNNSNNNNNSNNNNNGNSNNN) the composition is skewed to low complexity. Disordered regions lie at residues 1 to 34 (MNNN…SGKG), 162 to 187 (TNIS…SHHH), 440 to 461 (KKRK…NKSS), 544 to 568 (VIDD…SIIN), 736 to 777 (NKNK…INSN), 837 to 979 (TKGK…NDLK), 1044 to 1071 (VSKS…KEQS), 1084 to 1106 (NMNN…NDNK), 1160 to 1215 (TSSG…VLER), 1257 to 1290 (NITA…NNNG), 1651 to 1686 (LRSK…GRKK), 1704 to 1731 (PRKK…NSEK), and 1742 to 1761 (IENK…NLNN). The span at 169–182 (KQPISSNQHPYQQK) shows a compositional bias: polar residues. Positions 550–559 (KRNKKEKKKT) are enriched in basic residues. The segment covering 741–776 (PNNINSNDNNNKNDDNNNNNNKNVDGNNNNNNNINS) has biased composition (low complexity). Positions 838-847 (KGKKKGRKKK) are enriched in basic residues. Positions 856 to 873 (NIKEDIKSSKKDKKKDNI) are enriched in basic and acidic residues. A compositionally biased stretch (low complexity) spans 874 to 924 (NDNNNDNNNDNNNDNNNDNNNDNNNDNNNDNNNNNNNNNNNNNNNNNNNHN). Basic residues predominate over residues 943 to 954 (KKKTRQYRKKSK). A compositionally biased stretch (basic and acidic residues) spans 955–966 (ITNDDNNEKIKQ). Residues 1045 to 1057 (SKSNIPSSFSSPP) show a composition bias toward low complexity. Composition is skewed to basic and acidic residues over residues 1060–1071 (TNNKNDIDKEQS), 1088–1106 (EKSK…NDNK), and 1166–1192 (NKEE…KNVD). Positions 1205-1215 (RKKRKKDVLER) are enriched in basic residues. Residues 1261-1289 (NNNNDNNKNNDNDNNNNNNDNIINNNNNN) are compositionally biased toward low complexity. 2 stretches are compositionally biased toward basic residues: residues 1660–1686 (KEHK…GRKK) and 1704–1717 (PRKK…RKSK).

This is an uncharacterized protein from Plasmodium falciparum (isolate 3D7).